Consider the following 608-residue polypeptide: Aspartate--tRNA(Asp/Asn) ligase (608 aa).

Glu-179 is a binding site for L-aspartate. An aspartate region spans residues 203-206; the sequence is QLFK. L-aspartate is bound at residue Arg-225. Residues 225–227 and Gln-234 contribute to the ATP site; that span reads RDE. His-461 serves as a coordination point for L-aspartate. An ATP-binding site is contributed by Glu-494. Position 501 (Arg-501) interacts with L-aspartate. Position 546–549 (546–549) interacts with ATP; the sequence is GLDR.

Belongs to the class-II aminoacyl-tRNA synthetase family. Type 1 subfamily. As to quaternary structure, homodimer.

The protein localises to the cytoplasm. The enzyme catalyses tRNA(Asx) + L-aspartate + ATP = L-aspartyl-tRNA(Asx) + AMP + diphosphate. Functionally, aspartyl-tRNA synthetase with relaxed tRNA specificity since it is able to aspartylate not only its cognate tRNA(Asp) but also tRNA(Asn). Reaction proceeds in two steps: L-aspartate is first activated by ATP to form Asp-AMP and then transferred to the acceptor end of tRNA(Asp/Asn). This Psychrobacter arcticus (strain DSM 17307 / VKM B-2377 / 273-4) protein is Aspartate--tRNA(Asp/Asn) ligase.